Reading from the N-terminus, the 76-residue chain is Exodeoxyribonuclease 7 small subunit (76 aa).

This sequence belongs to the XseB family. As to quaternary structure, heterooligomer composed of large and small subunits.

The protein localises to the cytoplasm. It carries out the reaction Exonucleolytic cleavage in either 5'- to 3'- or 3'- to 5'-direction to yield nucleoside 5'-phosphates.. Bidirectionally degrades single-stranded DNA into large acid-insoluble oligonucleotides, which are then degraded further into small acid-soluble oligonucleotides. This Arthrobacter sp. (strain FB24) protein is Exodeoxyribonuclease 7 small subunit.